Here is a 74-residue protein sequence, read N- to C-terminus: Probable tetrachloroethene reductive dehalogenase membrane anchor protein (74 aa).

Helical transmembrane passes span 11–31 (ALGL…ISMG) and 40–60 (AGSI…FLLM).

The protein belongs to the PceB family.

It is found in the cell inner membrane. In terms of biological role, may act as a membrane anchor for the tetrachloroethene reductive dehalogenase PceA. The sequence is that of Probable tetrachloroethene reductive dehalogenase membrane anchor protein from Sulfurospirillum multivorans (Dehalospirillum multivorans).